A 313-amino-acid chain; its full sequence is Pseudouridine kinase (313 aa).

It belongs to the carbohydrate kinase PfkB family.

It catalyses the reaction pseudouridine + ATP = psi-UMP + ADP + H(+). Functionally, catalyzes the phosphorylation of pseudouridine to pseudouridine 5'-phosphate (PsiMP). This is Pseudouridine kinase (psuK) from Escherichia coli (strain K12).